Reading from the N-terminus, the 145-residue chain is Small ribosomal subunit protein uS19 (145 aa).

Position 2 is an N-acetylalanine (alanine 2). A Glycyl lysine isopeptide (Lys-Gly) (interchain with G-Cter in SUMO2) cross-link involves residue lysine 108.

It belongs to the universal ribosomal protein uS19 family. Component of the small ribosomal subunit.

It localises to the cytoplasm. Its function is as follows. Component of the small ribosomal subunit. The ribosome is a large ribonucleoprotein complex responsible for the synthesis of proteins in the cell. The protein is Small ribosomal subunit protein uS19 (RPS15) of Oryctolagus cuniculus (Rabbit).